We begin with the raw amino-acid sequence, 328 residues long: Alanine racemase (328 aa).

Catalysis depends on Lys-33, which acts as the Proton acceptor; specific for D-alanine. Lys-33 is subject to N6-(pyridoxal phosphate)lysine. Arg-118 contributes to the substrate binding site. Tyr-237 (proton acceptor; specific for L-alanine) is an active-site residue. Met-283 contributes to the substrate binding site.

This sequence belongs to the alanine racemase family. Pyridoxal 5'-phosphate serves as cofactor.

The enzyme catalyses L-alanine = D-alanine. It participates in amino-acid biosynthesis; D-alanine biosynthesis; D-alanine from L-alanine: step 1/1. In terms of biological role, catalyzes the interconversion of L-alanine and D-alanine. May also act on other amino acids. The chain is Alanine racemase (alr) from Campylobacter jejuni (strain RM1221).